Consider the following 145-residue polypeptide: [Ribosomal protein bS18]-alanine N-acetyltransferase (145 aa).

In terms of domain architecture, N-acetyltransferase spans 1-145 (MIETIVEQDF…ENAVIMALYL (145 aa)). Position 67–69 (67–69 (LAV)) interacts with acetyl-CoA. The active-site Proton acceptor is the Glu101. Asn106 contributes to the acetyl-CoA binding site. The Proton donor role is filled by Tyr113.

This sequence belongs to the acetyltransferase family. RimI subfamily.

The protein resides in the cytoplasm. The enzyme catalyses N-terminal L-alanyl-[ribosomal protein bS18] + acetyl-CoA = N-terminal N(alpha)-acetyl-L-alanyl-[ribosomal protein bS18] + CoA + H(+). Its function is as follows. Acetylates the N-terminal alanine of ribosomal protein bS18. This Haemophilus ducreyi (strain 35000HP / ATCC 700724) protein is [Ribosomal protein bS18]-alanine N-acetyltransferase.